The chain runs to 122 residues: ORF7a protein (122 aa).

The signal sequence occupies residues 1 to 15 (MKIILFLTLIVFTSC). One can recognise an X4e domain in the interval 16–81 (ELYHYQECVR…RHTYQLRARS (66 aa)). Over 16-96 (ELYHYQECVR…FIRQEEVQQE (81 aa)) the chain is Virion surface. Disulfide bonds link Cys23/Cys58 and Cys35/Cys67. Residues 97-117 (LYSPLFLIVAALVFLILCFTI) form a helical membrane-spanning segment. At 118–122 (KRKTE) the chain is on the intravirion side. Positions 118 to 122 (KRKTE) match the Di-lysine motif motif.

As to quaternary structure, interacts with the spike glycoprotein. Interacts with M protein. Interacts with E protein. Interacts with the ORF3a protein. Interacts with human SGT. Interacts with host ITGAL. Interacts with host BST2.

The protein localises to the virion. Its subcellular location is the host endoplasmic reticulum membrane. The protein resides in the host endoplasmic reticulum-Golgi intermediate compartment membrane. It is found in the host Golgi apparatus membrane. Its function is as follows. Plays a role as antagonist of host tetherin (BST2), disrupting its antiviral effect. Acts by binding to BST2 thereby interfering with its glycosylation. May suppress small interfering RNA (siRNA). May bind to host ITGAL, thereby playing a role in attachment or modulation of leukocytes. The protein is ORF7a protein of Severe acute respiratory syndrome coronavirus (SARS-CoV).